The chain runs to 786 residues: MNCRQFLSSHCSRDSSGGGGGSKMFSCNRSSFSGASGGGGRFSSSRSFGGGSSGACGRGGGGSFGSSYGGGSGGGFSAGSFGGHSRGFSGGSGGGFGGGFGGGFGGFSGGSGGGFGGPGGFGSGFDSGAGGILGADEKTTMQDLNSRLASYLDKVQALEDANKELESKIREWYDKQGSRTFHRDYSPYYDTIEDLKNQIVNITADNNKTLLDLDNTRMTLDDIRMKCDIENNLRLAVNADINGLRKVLDDLTMQKSDLEMHYESLQEELIALKKNHEDEMSQLTGQNSGDVNVEMNAAPGRDLTKILNDMREEYERISAKNRKDIEEQYETQMSQMEQEVMSSGQEMESNHKEVTQLRHSIQEMEIELQSQLSKKSALEKSLEDTKNHYCGQLQQLQEQIRSLEGQITEIRGEIECQNQEYSLLLNIKTRLEQEIKTYRSLLEGGQEDFESHESGQSHFGSGGSRQQGGIGGSHGRGSRGGSGGSYGGGSSSGGGSGGSHGGGSGGSYGGGSSSGGGSGGRGGSGGSYGGGSGSGGGSSGSYGGGSSSGGGSGGSHGGGSGGSYGGGSSSGGGSGGRGGSGGSYGGGSGSGGGRGGGCEEGSGSGGRSGGSYGGGSGSGGGSSCSYGGGSSSGGGSGGSYGGGSSSGGGSGGKGGSGCSYSGGSSSGGGSGGSYGGGSSSGRGSGGRGGSAGSYGGGSGSGGGRGGGCEEGSGSGGRSGGSYGGGSGSGGRSGGSYGGGSGSGGGSGGSYGGGSGSKGGSGRSSQVQSSSSKSGECDDTQGYHIQY.

The tract at residues 1 to 21 is disordered; the sequence is MNCRQFLSSHCSRDSSGGGGG. The interval 1–136 is head; it reads MNCRQFLSSH…SGAGGILGAD (136 aa). The residue at position 52 (S52) is a Phosphoserine. Residues 137-172 form a coil 1A region; sequence EKTTMQDLNSRLASYLDKVQALEDANKELESKIREW. In terms of domain architecture, IF rod spans 137-449; it reads EKTTMQDLNS…SLLEGGQEDF (313 aa). Residues 173-191 are linker 1; sequence YDKQGSRTFHRDYSPYYDT. The segment at 192–283 is coil 1B; that stretch reads IEDLKNQIVN…KNHEDEMSQL (92 aa). Positions 284-306 are linker 12; sequence TGQNSGDVNVEMNAAPGRDLTKI. Residues 307–445 are coil 2; sequence LNDMREEYER…KTYRSLLEGG (139 aa). The segment at 446–760 is tail; the sequence is QEDFESHESG…GGGSGSKGGS (315 aa). The interval 447–786 is disordered; the sequence is EDFESHESGQ…DDTQGYHIQY (340 aa). Composition is skewed to gly residues over residues 460 to 657 and 664 to 761; these read GSGG…GGSG and SSSG…GGSG. A compositionally biased stretch (low complexity) spans 762–773; sequence RSSQVQSSSSKS.

Belongs to the intermediate filament family. Heterotetramer of two type I and two type II keratins.

In terms of biological role, may serve an important special function either in the mature palmar and plantar skin tissue or in the morphogenetic program of the formation of these tissues. Plays a role in keratin filament assembly. The sequence is that of Keratin, type I cytoskeletal 9 from Canis lupus familiaris (Dog).